A 286-amino-acid polypeptide reads, in one-letter code: Release factor glutamine methyltransferase (286 aa).

2 residues coordinate S-adenosyl-L-methionine: Asp136 and Asn179. 179–182 (NPPY) contributes to the substrate binding site.

The protein belongs to the protein N5-glutamine methyltransferase family. PrmC subfamily.

The enzyme catalyses L-glutaminyl-[peptide chain release factor] + S-adenosyl-L-methionine = N(5)-methyl-L-glutaminyl-[peptide chain release factor] + S-adenosyl-L-homocysteine + H(+). In terms of biological role, methylates the class 1 translation termination release factors RF1/PrfA and RF2/PrfB on the glutamine residue of the universally conserved GGQ motif. The chain is Release factor glutamine methyltransferase from Borreliella burgdorferi (strain ATCC 35210 / DSM 4680 / CIP 102532 / B31) (Borrelia burgdorferi).